A 115-amino-acid chain; its full sequence is Large ribosomal subunit protein bL19 (115 aa).

It belongs to the bacterial ribosomal protein bL19 family.

This protein is located at the 30S-50S ribosomal subunit interface and may play a role in the structure and function of the aminoacyl-tRNA binding site. The protein is Large ribosomal subunit protein bL19 of Streptococcus pyogenes serotype M49 (strain NZ131).